The sequence spans 376 residues: UPF0754 membrane protein BLi01057/BL02871 (376 aa).

A run of 2 helical transmembrane segments spans residues methionine 1–threonine 21 and tyrosine 356–isoleucine 376.

Belongs to the UPF0754 family.

The protein resides in the cell membrane. The chain is UPF0754 membrane protein BLi01057/BL02871 from Bacillus licheniformis (strain ATCC 14580 / DSM 13 / JCM 2505 / CCUG 7422 / NBRC 12200 / NCIMB 9375 / NCTC 10341 / NRRL NRS-1264 / Gibson 46).